We begin with the raw amino-acid sequence, 117 residues long: Large ribosomal subunit protein bL20c (117 aa).

The protein belongs to the bacterial ribosomal protein bL20 family.

Its subcellular location is the plastid. The protein resides in the chloroplast. Functionally, binds directly to 23S ribosomal RNA and is necessary for the in vitro assembly process of the 50S ribosomal subunit. It is not involved in the protein synthesizing functions of that subunit. This is Large ribosomal subunit protein bL20c from Phalaenopsis aphrodite subsp. formosana (Moth orchid).